A 2021-amino-acid chain; its full sequence is Fanconi anemia group M protein homolog (2021 aa).

The residue at position 30 (Ser-30) is a Phosphoserine. The Helicase ATP-binding domain occupies 86–254 (ISRSALFCNT…QVITNLLIGK (169 aa)). 99-106 (LPTGLGKT) lines the ATP pocket. Residues 202 to 205 (DEAH) carry the DEAH box motif. The Helicase C-terminal domain occupies 437–612 (KLEEVILEHF…VLRLYQGSPR (176 aa)). Disordered regions lie at residues 638–657 (RSVQ…SKSN), 837–886 (PCRA…RMAD), 1002–1049 (CSPY…LPGT), 1244–1273 (GAAD…AISP), 1296–1319 (ASSS…SSKT), 1369–1441 (PRRT…RTCP), 1447–1466 (KGRN…RSQV), 1615–1700 (NKKQ…QPSI), and 1712–1732 (AQSH…ESRK). A compositionally biased stretch (polar residues) spans 1018–1035 (ASHSAGNSQQNLESNSAK). A compositionally biased stretch (basic and acidic residues) spans 1249 to 1259 (SGRHSDKEIKD). Over residues 1370–1379 (RRTEVEHLTS) the composition is skewed to basic and acidic residues. Basic residues predominate over residues 1388-1397 (RKTKKPKRNV). Ser-1637 is modified (phosphoserine). The span at 1669–1682 (SGPSGSSVPPQVLS) shows a compositional bias: low complexity. Residues 1684 to 1700 (PSWNQSSRQRLQVQPSI) are compositionally biased toward polar residues. An interaction with FAAP24 region spans residues 1689–2009 (SSRQRLQVQP…LNQERQKPDT (321 aa)).

The protein belongs to the DEAD box helicase family. DEAH subfamily. FANCM sub-subfamily. Component of the Fanconi anemia (FA) core complex, which consists of CENPS, CENPX, FANCA, FANCB, FANCC, FANCE, FANCF, FANCG, FANCL, FANCM, FAAP24 and FAAP100. The FA core complex associates with Bloom syndrome (BLM) complex, which consists of at least BLM, DNA topoisomerase 3-alpha/TOP3A, RMI1/BLAP75, RPA1/RPA70 and RPA2/RPA32. This supercomplex between FA and BLM complexes has been called BRAFT. Forms a discrete complex with CENPS and CENPX, called FANCM-MHF; this interaction stimulates DNA binding and replication fork remodeling by FANCM and stabilizes the binding partners. Forms a heterodimer with FAAP24; this interaction increases FANCM single-stranded DNA-binding activity. In terms of processing, phosphorylated; hyperphosphorylated in response to genotoxic stress.

It localises to the nucleus. The catalysed reaction is ATP + H2O = ADP + phosphate + H(+). DNA-dependent ATPase component of the Fanconi anemia (FA) core complex. Required for the normal activation of the FA pathway, leading to monoubiquitination of the FANCI-FANCD2 complex in response to DNA damage, cellular resistance to DNA cross-linking drugs, and prevention of chromosomal breakage. In complex with CENPS and CENPX, binds double-stranded DNA (dsDNA), fork-structured DNA (fsDNA) and Holliday junction substrates. Its ATP-dependent DNA branch migration activity can process branched DNA structures such as a movable replication fork. This activity is strongly stimulated in the presence of CENPS and CENPX. In complex with FAAP24, efficiently binds to single-strand DNA (ssDNA), splayed-arm DNA, and 3'-flap substrates. In vitro, on its own, strongly binds ssDNA oligomers and weakly fsDNA, but does not bind to dsDNA. The polypeptide is Fanconi anemia group M protein homolog (Fancm) (Mus musculus (Mouse)).